A 264-amino-acid chain; its full sequence is Molybdenum transport system permease protein ModB (264 aa).

The next 6 helical transmembrane spans lie at 11 to 31 (VYLPAIAGIVFVAMPLVAIAI), 57 to 77 (TAAASTVLCVLLGVPMALVLA), 90 to 110 (LILLPLVLPPVVGGIALLYAF), 127 to 147 (IAFSTAAVVLAQTFVSLPYLV), 176 to 196 (WWRVTLPLLLPGVVSGSVLAF), and 234 to 254 (AAVALSLLLVVVAALVVLGVG). An ABC transmembrane type-1 domain is found at 51–253 (LLLSVKTAAA…VVAALVVLGV (203 aa)).

It belongs to the binding-protein-dependent transport system permease family. CysTW subfamily.

It is found in the cell membrane. Functionally, part of the binding-protein-dependent transport system ModABCD for molybdenum; probably responsible for the translocation of the substrate across the membrane. The chain is Molybdenum transport system permease protein ModB (modB) from Mycobacterium bovis (strain ATCC BAA-935 / AF2122/97).